Reading from the N-terminus, the 760-residue chain is Transferrin receptor protein 1 (760 aa).

The Cytoplasmic segment spans residues 1 to 65; that stretch reads MMDQARSAFS…VTKPKRCGGS (65 aa). Positions 1–67 are mediates interaction with SH3BP4; the sequence is MMDQARSAFS…KPKRCGGSIC (67 aa). Phosphoserine occurs at positions 10 and 19. Tyr-20 bears the Phosphotyrosine mark. The Endocytosis signal motif lies at 20 to 23; sequence YTRF. A Phosphothreonine modification is found at Thr-21. The residue at position 24 (Ser-24) is a Phosphoserine. The short motif at 58–61 is the Stop-transfer sequence element; sequence KPKR. S-palmitoyl cysteine attachment occurs at residues Cys-62 and Cys-67. The helical; Signal-anchor for type II membrane protein transmembrane segment at 66-86 threads the bilayer; that stretch reads ICYGTIAVIIFFLIGFMIGYL. Topologically, residues 87-760 are extracellular; that stretch reads GYCKGVEPKT…GDVWDIDNEF (674 aa). The region spanning 223–313 is the PA domain; sequence SKAATVTGKL…GTGDPYTPGF (91 aa). N-linked (GlcNAc...) asparagine glycans are attached at residues Asn-251 and Asn-317. Residues 569–760 are ligand-binding; sequence TMDTYKELTE…GDVWDIDNEF (192 aa). The Cell attachment site signature appears at 646–648; it reads RGD. N-linked (GlcNAc...) asparagine glycans are attached at residues Asn-722 and Asn-727.

The protein belongs to the peptidase M28 family. M28B subfamily. Homodimer; disulfide-linked. Binds one transferrin or HFE molecule per subunit. Interacts with SH3BP4. Interacts with STEAP3; facilitates TFRC endocytosis in erythroid precursor cells. Post-translationally, stearoylated by ZDHHC6 which inhibits TFRC-mediated activation of the JNK pathway and promotes mitochondrial fragmentation. Stearoylation does not affect iron uptake.

The protein localises to the cell membrane. The protein resides in the melanosome. Functionally, cellular uptake of iron occurs via receptor-mediated endocytosis of ligand-occupied transferrin receptor into specialized endosomes. Endosomal acidification leads to iron release. The apotransferrin-receptor complex is then recycled to the cell surface with a return to neutral pH and the concomitant loss of affinity of apotransferrin for its receptor. Transferrin receptor is necessary for development of erythrocytes and the nervous system. Positively regulates T and B cell proliferation through iron uptake. Acts as a lipid sensor that regulates mitochondrial fusion by regulating activation of the JNK pathway. When dietary levels of stearate (C18:0) are low, promotes activation of the JNK pathway, resulting in HUWE1-mediated ubiquitination and subsequent degradation of the mitofusin MFN2 and inhibition of mitochondrial fusion. When dietary levels of stearate (C18:0) are high, TFRC stearoylation inhibits activation of the JNK pathway and thus degradation of the mitofusin MFN2. Mediates uptake of NICOL1 into fibroblasts where it may regulate extracellular matrix production. This chain is Transferrin receptor protein 1 (TFRC), found in Pongo abelii (Sumatran orangutan).